A 223-amino-acid polypeptide reads, in one-letter code: Deoxyribose-phosphate aldolase (223 aa).

Asp-91 functions as the Proton donor/acceptor in the catalytic mechanism. Catalysis depends on Lys-153, which acts as the Schiff-base intermediate with acetaldehyde. Catalysis depends on Lys-182, which acts as the Proton donor/acceptor.

It belongs to the DeoC/FbaB aldolase family. DeoC type 1 subfamily.

The protein localises to the cytoplasm. It catalyses the reaction 2-deoxy-D-ribose 5-phosphate = D-glyceraldehyde 3-phosphate + acetaldehyde. It participates in carbohydrate degradation; 2-deoxy-D-ribose 1-phosphate degradation; D-glyceraldehyde 3-phosphate and acetaldehyde from 2-deoxy-alpha-D-ribose 1-phosphate: step 2/2. Functionally, catalyzes a reversible aldol reaction between acetaldehyde and D-glyceraldehyde 3-phosphate to generate 2-deoxy-D-ribose 5-phosphate. The sequence is that of Deoxyribose-phosphate aldolase from Yersinia pseudotuberculosis serotype O:1b (strain IP 31758).